The sequence spans 729 residues: 1,4-alpha-glucan branching enzyme GlgB (729 aa).

Asp408 (nucleophile) is an active-site residue. Residue Glu461 is the Proton donor of the active site.

Belongs to the glycosyl hydrolase 13 family. GlgB subfamily. As to quaternary structure, monomer.

It catalyses the reaction Transfers a segment of a (1-&gt;4)-alpha-D-glucan chain to a primary hydroxy group in a similar glucan chain.. The protein operates within glycan biosynthesis; glycogen biosynthesis. In terms of biological role, catalyzes the formation of the alpha-1,6-glucosidic linkages in glycogen by scission of a 1,4-alpha-linked oligosaccharide from growing alpha-1,4-glucan chains and the subsequent attachment of the oligosaccharide to the alpha-1,6 position. The chain is 1,4-alpha-glucan branching enzyme GlgB from Vibrio cholerae serotype O1 (strain ATCC 39315 / El Tor Inaba N16961).